Consider the following 203-residue polypeptide: Large ribosomal subunit protein bL25 (203 aa).

This sequence belongs to the bacterial ribosomal protein bL25 family. CTC subfamily. In terms of assembly, part of the 50S ribosomal subunit; part of the 5S rRNA/L5/L18/L25 subcomplex. Contacts the 5S rRNA. Binds to the 5S rRNA independently of L5 and L18.

Functionally, this is one of the proteins that binds to the 5S RNA in the ribosome where it forms part of the central protuberance. In Pseudomonas savastanoi pv. phaseolicola (strain 1448A / Race 6) (Pseudomonas syringae pv. phaseolicola (strain 1448A / Race 6)), this protein is Large ribosomal subunit protein bL25.